We begin with the raw amino-acid sequence, 531 residues long: Achacin (531 aa).

The signal sequence occupies residues 1-22 (MLLLNSALFILCLVCWLPGTSS). Positions 23–29 (SRVLTRR) are excised as a propeptide. N112, N150, N308, and N392 each carry an N-linked (GlcNAc...) asparagine glycan.

This sequence to A.kurodai aplysianin-A. Homodimer. As to expression, collar tissue.

In terms of biological role, antibacterial glycoprotein. The chain is Achacin from Lissachatina fulica (Giant African land snail).